The following is a 200-amino-acid chain: Phosphoprotein p30 (200 aa).

This sequence belongs to the asfivirus phosphoprotein p30 family. Oligomer. Interacts with host HNRNPK. Phosphorylated on serine residues in the 115 N-terminal amino acids.

Its subcellular location is the host cytoplasm. The protein resides in the host nucleus. The protein localises to the virion. Its function is as follows. Modifies the subcellular distribution of heterogeneous nuclear ribonucleoprotein K (HNRNPK) and may contribute to modulate HNRNPK functions related to processing and export of mRNAs during ASFV infection. Necessary for virus internalization. The polypeptide is Phosphoprotein p30 (African swine fever virus (isolate Tick/Malawi/Lil 20-1/1983) (ASFV)).